The following is a 314-amino-acid chain: N-alpha-acetyltransferase 80 (314 aa).

In terms of domain architecture, N-acetyltransferase spans L90–P243. Residues R113 and R118–S121 each bind substrate. Residues V169–V171, G177–R182, and Q207 each bind acetyl-CoA. The segment at V260–L295 is disordered. The segment covering P267–Q292 has biased composition (pro residues).

This sequence belongs to the acetyltransferase family.

The protein resides in the cytoplasm. The protein localises to the cytosol. The catalysed reaction is N-terminal L-aspartyl-L-aspartyl-L-aspartyl-[protein] + acetyl-CoA = N-terminal N-acetyl-L-aspartyl-L-aspartyl-L-aspartyl-[protein] + CoA + H(+). It carries out the reaction N-terminal L-glutamyl-L-glutamyl-L-glutamyl-[protein] + acetyl-CoA = N-terminal N-acetyl-L-glutamyl-L-glutamyl-L-glutamyl-[protein] + CoA + H(+). Functionally, N-alpha-acetyltransferase that specifically mediates the acetylation of the acidic amino terminus of processed forms of beta- and gamma-actin (ACTB and ACTG, respectively). N-terminal acetylation of processed beta- and gamma-actin regulates actin filament depolymerization and elongation. In vivo, preferentially displays N-terminal acetyltransferase activity towards acid N-terminal sequences starting with Asp-Asp-Asp and Glu-Glu-Glu. In vitro, shows high activity towards Met-Asp-Glu-Leu and Met-Asp-Asp-Asp. May act as a tumor suppressor. The polypeptide is N-alpha-acetyltransferase 80 (Mus musculus (Mouse)).